Reading from the N-terminus, the 78-residue chain is D-alanyl carrier protein (78 aa).

Positions 1–78 (MAFRENVLEI…MIITQLEALK (78 aa)) constitute a Carrier domain. An O-(pantetheine 4'-phosphoryl)serine modification is found at Ser36.

This sequence belongs to the DltC family. Post-translationally, 4'-phosphopantetheine is transferred from CoA to a specific serine of apo-DCP.

It is found in the cytoplasm. It participates in cell wall biogenesis; lipoteichoic acid biosynthesis. Functionally, carrier protein involved in the D-alanylation of lipoteichoic acid (LTA). The loading of thioester-linked D-alanine onto DltC is catalyzed by D-alanine--D-alanyl carrier protein ligase DltA. The DltC-carried D-alanyl group is further transferred to cell membrane phosphatidylglycerol (PG) by forming an ester bond, probably catalyzed by DltD. D-alanylation of LTA plays an important role in modulating the properties of the cell wall in Gram-positive bacteria, influencing the net charge of the cell wall. This chain is D-alanyl carrier protein, found in Listeria monocytogenes serotype 4a (strain HCC23).